Consider the following 308-residue polypeptide: MESGDQAGETSKKKKKGPYMSWSDQECYELTAILVDAIKRGWRDKNGTISKTTVERKILPLLNKKFKCNKTYTNYLSRMKSMKKEYSVYAALFWFSSGFGWDPITKQFTAPDDVWAAYLMGHPNHHHMRTSTFEDFEDLQLIFESAIAKGNNAFGLGGDSNAETFEEEDDLQAGDNVNHMEINDDEVNETLPKEKLPTRKRSKTNRNGDRSDSINHGESSEKVLSEMIGVGTNIINLIQQREERHQREVEFRETEKKKNNVWDAIKEIPDLEDHIRYDAVTKIHTLNLKDVFVSMSVEERLGWIRRNT.

A disordered region spans residues Gly158–Glu221. The segment covering Arg206–Glu221 has biased composition (basic and acidic residues).

This is an uncharacterized protein from Arabidopsis thaliana (Mouse-ear cress).